Reading from the N-terminus, the 312-residue chain is Ribosomal RNA small subunit methyltransferase H (312 aa).

Residues 35–37, aspartate 55, phenylalanine 79, aspartate 101, and glutamine 108 contribute to the S-adenosyl-L-methionine site; that span reads GGH.

This sequence belongs to the methyltransferase superfamily. RsmH family.

The protein resides in the cytoplasm. The enzyme catalyses cytidine(1402) in 16S rRNA + S-adenosyl-L-methionine = N(4)-methylcytidine(1402) in 16S rRNA + S-adenosyl-L-homocysteine + H(+). Specifically methylates the N4 position of cytidine in position 1402 (C1402) of 16S rRNA. The polypeptide is Ribosomal RNA small subunit methyltransferase H (Buchnera aphidicola subsp. Schizaphis graminum (strain Sg)).